The chain runs to 154 residues: Prefoldin subunit alpha (154 aa).

Polar residues predominate over residues 92 to 102; it reads DNAVESLSTKQ. The segment at 92–154 is disordered; it reads DNAVESLSTK…MQDQQPEDNE (63 aa). The segment covering 103-114 has biased composition (basic and acidic residues); the sequence is DALDNRIESLRD. The span at 128 to 148 shows a compositional bias: low complexity; it reads QQAQQMQQQMQQQQMQQMQDQ.

This sequence belongs to the prefoldin subunit alpha family. Heterohexamer of two alpha and four beta subunits.

The protein resides in the cytoplasm. Molecular chaperone capable of stabilizing a range of proteins. Seems to fulfill an ATP-independent, HSP70-like function in archaeal de novo protein folding. This chain is Prefoldin subunit alpha, found in Haloquadratum walsbyi (strain DSM 16790 / HBSQ001).